The chain runs to 101 residues: Small ribosomal subunit protein uS10 (101 aa).

This sequence belongs to the universal ribosomal protein uS10 family. Part of the 30S ribosomal subunit.

In terms of biological role, involved in the binding of tRNA to the ribosomes. The chain is Small ribosomal subunit protein uS10 from Saccharopolyspora erythraea (strain ATCC 11635 / DSM 40517 / JCM 4748 / NBRC 13426 / NCIMB 8594 / NRRL 2338).